Consider the following 674-residue polypeptide: Methionine--tRNA ligase (674 aa).

Positions 12–22 (PYANGPIHLGH) match the 'HIGH' region motif. Residues Cys143, Cys146, Cys156, and Cys159 each contribute to the Zn(2+) site. Positions 328-332 (KMSKS) match the 'KMSKS' region motif. Lys331 lines the ATP pocket. Residues 573–674 (SFAKLDLRIA…EGARPGMRVK (102 aa)) enclose the tRNA-binding domain.

It belongs to the class-I aminoacyl-tRNA synthetase family. MetG type 1 subfamily. As to quaternary structure, homodimer. The cofactor is Zn(2+).

The protein localises to the cytoplasm. It carries out the reaction tRNA(Met) + L-methionine + ATP = L-methionyl-tRNA(Met) + AMP + diphosphate. Functionally, is required not only for elongation of protein synthesis but also for the initiation of all mRNA translation through initiator tRNA(fMet) aminoacylation. This Nitrosococcus oceani (strain ATCC 19707 / BCRC 17464 / JCM 30415 / NCIMB 11848 / C-107) protein is Methionine--tRNA ligase.